Reading from the N-terminus, the 500-residue chain is Glutamate--tRNA ligase (500 aa).

Residues 12–22 carry the 'HIGH' region motif; sequence PSPTGHLHIGN. The 'KMSKS' region signature appears at 259–263; that stretch reads KLSKR. Lys262 provides a ligand contact to ATP.

This sequence belongs to the class-I aminoacyl-tRNA synthetase family. Glutamate--tRNA ligase type 1 subfamily. Monomer.

Its subcellular location is the cytoplasm. The enzyme catalyses tRNA(Glu) + L-glutamate + ATP = L-glutamyl-tRNA(Glu) + AMP + diphosphate. Functionally, catalyzes the attachment of glutamate to tRNA(Glu) in a two-step reaction: glutamate is first activated by ATP to form Glu-AMP and then transferred to the acceptor end of tRNA(Glu). The polypeptide is Glutamate--tRNA ligase (Lactobacillus delbrueckii subsp. bulgaricus).